The primary structure comprises 771 residues: Endoplasmin homolog (771 aa).

The signal sequence occupies residues 1–24; sequence MANSSLLRVVLVALLLLGSVTVSA. ATP contacts are provided by Asn-63, Asp-109, and Phe-160. A glycan (N-linked (GlcNAc...) asparagine) is linked at Asn-63. Residues 254 to 282 form a disordered region; sequence AATPESAAEERSLDEGAVEEDPDKEGDTQ. N-linked (GlcNAc...) asparagine glycosylation is found at Asn-306 and Asn-402. A disordered region spans residues 727–771; the sequence is ADDSLLPPDDAEYTVSDTETEEEEEQPKVDTNAHEEAETDGEGDL. Positions 752 to 762 are enriched in basic and acidic residues; it reads QPKVDTNAHEE. Residues 768-771 carry the Prevents secretion from ER motif; it reads EGDL.

Belongs to the heat shock protein 90 family. As to quaternary structure, homotetramer.

Its subcellular location is the endoplasmic reticulum. Its function is as follows. Molecular chaperone that functions in the processing and transport of secreted proteins. Required for the synthesis of lipophosphoglycan (LPG), a cell surface glycoconjugate. Necessary for the attachment of the galactosyl residue to the mannose within the phosphoglycan repeats of the nascent LPG chain. Also required for addition of phosphoglycan to acid phosphatase. Not required for normal growth. Has ATPase activity. Binds heparin with micromolar affinity which may facilitate infection of host cells. The polypeptide is Endoplasmin homolog (Leishmania donovani).